A 329-amino-acid chain; its full sequence is MSKPAMRVAVTGAAGQIGYALLFRIASGEMLGKDQPVILQLLEIPDEKAQKALKGVIMELEDCAFPLLQEVTAHADPKTAFKDADVALLVGARPRGPGMERKDLLTVNAQIFTAQGRALNEVASRNVKVLVVGNPANTNAYIAMKSAPDLPAKNFTAMLRLDHNRALSQLAGKSGKAVAGIEKLIVWGNHSPTMYPDYRFATVDGQPLAKLINDEAWNRDTFIPTVGKRGAAIIEARGLSSAASAANAAIDHVRDWVLGSNGKWVTMGIPSDGSYGIPEGIIYGFPVTTANGEYTMVKDLEVDAFSRERMDFTLKELLEERDGIKDLLK.

12–18 serves as a coordination point for NAD(+); that stretch reads GAAGQIG. Substrate contacts are provided by Arg95 and Arg101. NAD(+)-binding positions include Asn108, Gln115, and 132–134; that span reads VGN. Asn134 and Arg165 together coordinate substrate. His190 serves as the catalytic Proton acceptor.

Belongs to the LDH/MDH superfamily. MDH type 2 family.

It catalyses the reaction (S)-malate + NAD(+) = oxaloacetate + NADH + H(+). Its function is as follows. Catalyzes the reversible oxidation of malate to oxaloacetate. This Bordetella avium (strain 197N) protein is Malate dehydrogenase.